Reading from the N-terminus, the 171-residue chain is MVVYDLLVSLSKESIDVLRFVEANLAAFNQQYIFFNIQRKNSITTPLLITPQQEKISQIVEFLMDEYNKNNRRPSGPPREQPMHPLLPYQQSPDEQPMMPYQQPPGNDDQPYEQIYHKKHASQQVNTELSDYYQHILALGDEDKGMDSTLKLPERTKRDSDDEDGMFSIKN.

2 disordered regions span residues N68 to Q124 and G140 to N171. Residues D141–S160 are compositionally biased toward basic and acidic residues.

The protein belongs to the asfivirus H171R family.

The protein localises to the virion. This is an uncharacterized protein from Ornithodoros (relapsing fever ticks).